The following is a 154-amino-acid chain: Interleukin-2 (154 aa).

The signal sequence occupies residues 1–20 (MYKMQLLCCIALTLALMANG). O-linked (GalNAc...) threonine glycosylation occurs at Thr-23. A disulfide bridge connects residues Cys-78 and Cys-126.

Belongs to the IL-2 family.

The protein localises to the secreted. Cytokine produced by activated CD4-positive helper T-cells and to a lesser extend activated CD8-positive T-cells and natural killer (NK) cells that plays pivotal roles in the immune response and tolerance. Binds to a receptor complex composed of either the high-affinity trimeric IL-2R (IL2RA/CD25, IL2RB/CD122 and IL2RG/CD132) or the low-affinity dimeric IL-2R (IL2RB and IL2RG). Interaction with the receptor leads to oligomerization and conformation changes in the IL-2R subunits resulting in downstream signaling starting with phosphorylation of JAK1 and JAK3. In turn, JAK1 and JAK3 phosphorylate the receptor to form a docking site leading to the phosphorylation of several substrates including STAT5. This process leads to activation of several pathways including STAT, phosphoinositide-3-kinase/PI3K and mitogen-activated protein kinase/MAPK pathways. Functions as a T-cell growth factor and can increase NK-cell cytolytic activity as well. Promotes strong proliferation of activated B-cells and subsequently immunoglobulin production. Plays a pivotal role in regulating the adaptive immune system by controlling the survival and proliferation of regulatory T-cells, which are required for the maintenance of immune tolerance. Moreover, participates in the differentiation and homeostasis of effector T-cell subsets, including Th1, Th2, Th17 as well as memory CD8-positive T-cells. This Sus scrofa (Pig) protein is Interleukin-2 (IL2).